The chain runs to 389 residues: 5-hydroxytryptamine receptor 1B (389 aa).

The disordered stretch occupies residues 1 to 27; sequence MEAAGAPCAPPPPAGSQTGAPPANLSS. Residues 1–45 are Extracellular-facing; it reads MEAAGAPCAPPPPAGSQTGAPPANLSSAPHNCSAEGYIYQDSVAL. A compositionally biased stretch (polar residues) spans 16–27; it reads SQTGAPPANLSS. Residues Asn24 and Asn31 are each glycosylated (N-linked (GlcNAc...) asparagine). Residues 46 to 71 traverse the membrane as a helical segment; the sequence is PWKVLLVILLALITLATTLSNAFVIA. Over 72–85 the chain is Cytoplasmic; it reads TVYRTRKLHTPANY. Residues 86–110 form a helical membrane-spanning segment; sequence LIASLAVTDLLVSILVMPISTMYTV. At 111–118 the chain is on the extracellular side; the sequence is TGRWTLGQ. A helical membrane pass occupies residues 119–144; that stretch reads VVCDLWLSSDITCCTASILHLCVIAL. Cys121 and Cys198 are joined by a disulfide. Ergotamine is bound by residues Asp128 and Thr133. The DRY motif; important for ligand-induced conformation changes and signaling signature appears at 145 to 147; sequence DRY. The Cytoplasmic segment spans residues 145–164; that stretch reads DRYWAITDAVEYSAKRTPKR. The chain crosses the membrane as a helical span at residues 165–183; that stretch reads AAVMIALVWVFSISISLPP. Over 184 to 204 the chain is Extracellular; sequence FFWRQAKAEEEVSDCVVNTDH. Ergotamine is bound at residue Val200. The chain crosses the membrane as a helical span at residues 205 to 228; that stretch reads ILYTVYSTVGAFYFPTLLLIALYG. Residues 229-314 are Cytoplasmic-facing; it reads RIYVEARSRI…AARERKATKT (86 aa). The segment covering 258–271 has biased composition (polar residues); sequence DSPGSTSSVTSVNS. The tract at residues 258-281 is disordered; the sequence is DSPGSTSSVTSVNSRAPDVPSESG. The chain crosses the membrane as a helical span at residues 315-336; it reads LGIILGAFIVCWLPFFIISLVM. The Extracellular portion of the chain corresponds to 337 to 346; it reads PICKDACWFH. Residues 347-369 form a helical membrane-spanning segment; it reads LAIFDFFTWLGYLNSLINPIIYT. An NPxxY motif; important for ligand-induced conformation changes and signaling motif is present at residues 364–368; the sequence is NPIIY. At 370-389 the chain is on the cytoplasmic side; the sequence is MSNEDFKQAFHKLIRFKCAG. Cys387 carries S-palmitoyl cysteine lipidation.

Belongs to the G-protein coupled receptor 1 family. In terms of assembly, homodimer. Heterodimer with HTR1D. In terms of processing, phosphorylated. Desensitization of the receptor may be mediated by its phosphorylation. Post-translationally, palmitoylated.

Its subcellular location is the cell membrane. G-protein coupled receptor for 5-hydroxytryptamine (serotonin). Also functions as a receptor for ergot alkaloid derivatives, various anxiolytic and antidepressant drugs and other psychoactive substances, such as lysergic acid diethylamide (LSD). Ligand binding causes a conformation change that triggers signaling via guanine nucleotide-binding proteins (G proteins) and modulates the activity of downstream effectors, such as adenylate cyclase. HTR1B is coupled to G(i)/G(o) G alpha proteins and mediates inhibitory neurotransmission by inhibiting adenylate cyclase activity. Arrestin family members inhibit signaling via G proteins and mediate activation of alternative signaling pathways. Regulates the release of 5-hydroxytryptamine, dopamine and acetylcholine in the brain, and thereby affects neural activity, nociceptive processing, pain perception, mood and behavior. Besides, plays a role in vasoconstriction of cerebral arteries. This chain is 5-hydroxytryptamine receptor 1B (HTR1B), found in Canis lupus familiaris (Dog).